The sequence spans 179 residues: Large ribosomal subunit protein uL6 (179 aa).

This sequence belongs to the universal ribosomal protein uL6 family. In terms of assembly, part of the 50S ribosomal subunit.

This protein binds to the 23S rRNA, and is important in its secondary structure. It is located near the subunit interface in the base of the L7/L12 stalk, and near the tRNA binding site of the peptidyltransferase center. The protein is Large ribosomal subunit protein uL6 of Syntrophobacter fumaroxidans (strain DSM 10017 / MPOB).